The primary structure comprises 701 residues: DNA ligase (701 aa).

NAD(+) is bound by residues 43-47 (DADYD), 92-93 (SL), and Glu-126. The active-site N6-AMP-lysine intermediate is the Lys-128. NAD(+)-binding residues include Arg-149, Glu-186, Lys-302, and Lys-326. Cys-417, Cys-420, Cys-440, and Cys-446 together coordinate Zn(2+). The BRCT domain maps to 622 to 701 (ETGSPVTGKT…DEWLALIGET (80 aa)).

Belongs to the NAD-dependent DNA ligase family. LigA subfamily. The cofactor is Mg(2+). It depends on Mn(2+) as a cofactor.

The enzyme catalyses NAD(+) + (deoxyribonucleotide)n-3'-hydroxyl + 5'-phospho-(deoxyribonucleotide)m = (deoxyribonucleotide)n+m + AMP + beta-nicotinamide D-nucleotide.. DNA ligase that catalyzes the formation of phosphodiester linkages between 5'-phosphoryl and 3'-hydroxyl groups in double-stranded DNA using NAD as a coenzyme and as the energy source for the reaction. It is essential for DNA replication and repair of damaged DNA. The protein is DNA ligase of Hyphomonas neptunium (strain ATCC 15444).